The primary structure comprises 243 residues: Probable transcriptional regulatory protein Athe_0816 (243 aa).

This sequence belongs to the TACO1 family.

The protein localises to the cytoplasm. The polypeptide is Probable transcriptional regulatory protein Athe_0816 (Caldicellulosiruptor bescii (strain ATCC BAA-1888 / DSM 6725 / KCTC 15123 / Z-1320) (Anaerocellum thermophilum)).